Consider the following 170-residue polypeptide: Thialysine N-epsilon-acetyltransferase (170 aa).

The N-acetyltransferase domain occupies 4 to 166 (VLIREAKEGD…FRFEGEAMRE (163 aa)). 27-28 (YE) contributes to the substrate binding site. Lys-29 carries the post-translational modification N6-acetyllysine. Glu-92 contributes to the substrate binding site. Acetyl-CoA-binding positions include 94-96 (IYV), 102-107 (GQGIGS), 133-135 (NKK), and Tyr-140. Residue Tyr-140 is the Proton donor of the active site. Substrate is bound at residue Glu-152.

The protein belongs to the acetyltransferase family. In terms of assembly, homodimer.

It is found in the cytoplasm. The enzyme catalyses S-(2-aminoethyl)-L-cysteine + acetyl-CoA = S-(2-acetamidoethyl)-L-cysteine + CoA + H(+). The catalysed reaction is an alkane-alpha,omega-diamine + acetyl-CoA = an N-acetylalkane-alpha,omega-diamine + CoA + H(+). Its function is as follows. Catalyzes the N-acetylation of the amino acid thialysine (S-(2-aminoethyl)-L-cysteine), a L-lysine analog with the 4-methylene group substituted with a sulfur. May also catalyze acetylation of polyamines, such as norspermidine, spermidine or spermine. However, ability to acetylate polyamines is weak, suggesting that it does not act as a diamine acetyltransferase in vivo. This chain is Thialysine N-epsilon-acetyltransferase, found in Sus scrofa (Pig).